The following is a 121-amino-acid chain: uncharacterized protein (121 aa).

2 disordered regions span residues 1-28 (MGCA…QNGD) and 60-81 (QENL…EIPG). Residues Ser-95 and Ser-115 each carry the phosphoserine modification.

This is an uncharacterized protein from Mus musculus (Mouse).